The chain runs to 330 residues: Glycerol-3-phosphate dehydrogenase [NAD(P)+] (330 aa).

NADPH is bound by residues Trp13, Arg33, and Lys103. Sn-glycerol 3-phosphate contacts are provided by Lys103, Gly131, and Thr133. Ala135 provides a ligand contact to NADPH. Positions 186, 239, 249, 250, and 251 each coordinate sn-glycerol 3-phosphate. Lys186 acts as the Proton acceptor in catalysis. Arg250 provides a ligand contact to NADPH. Residues Val274 and Glu276 each coordinate NADPH.

It belongs to the NAD-dependent glycerol-3-phosphate dehydrogenase family.

Its subcellular location is the cytoplasm. It carries out the reaction sn-glycerol 3-phosphate + NAD(+) = dihydroxyacetone phosphate + NADH + H(+). The enzyme catalyses sn-glycerol 3-phosphate + NADP(+) = dihydroxyacetone phosphate + NADPH + H(+). Its pathway is membrane lipid metabolism; glycerophospholipid metabolism. In terms of biological role, catalyzes the reduction of the glycolytic intermediate dihydroxyacetone phosphate (DHAP) to sn-glycerol 3-phosphate (G3P), the key precursor for phospholipid synthesis. The polypeptide is Glycerol-3-phosphate dehydrogenase [NAD(P)+] (Erythrobacter litoralis (strain HTCC2594)).